A 107-amino-acid chain; its full sequence is MAVRCSKIQRTDGRPGHSLQPAKVSFVAGQPLGYYSSWPLFALSHHMVVWYAAEHVYPSSFFFQSKLPPSEVFAYPGMEVFNEYTLYHAWVDEALSGVSKMELYAKA.

It is found in the mitochondrion. This is an uncharacterized protein from Arabidopsis thaliana (Mouse-ear cress).